The primary structure comprises 519 residues: Glutamate--cysteine ligase (519 aa).

Belongs to the glutamate--cysteine ligase type 1 family. Type 1 subfamily.

It catalyses the reaction L-cysteine + L-glutamate + ATP = gamma-L-glutamyl-L-cysteine + ADP + phosphate + H(+). The protein operates within sulfur metabolism; glutathione biosynthesis; glutathione from L-cysteine and L-glutamate: step 1/2. The polypeptide is Glutamate--cysteine ligase (Yersinia pseudotuberculosis serotype I (strain IP32953)).